Consider the following 317-residue polypeptide: Zinc finger protein 771 (317 aa).

A Glycyl lysine isopeptide (Lys-Gly) (interchain with G-Cter in SUMO2) cross-link involves residue Lys33. C2H2-type zinc fingers lie at residues 63-85, 91-113, 119-141, 147-169, 175-197, 203-225, 231-253, and 259-281; these read HACP…ARTH, FACT…GRTH, YQCP…RRRH, YACA…LRVH, YACP…RRTH, YACA…RRVH, HRCA…ARTH, and YPCT…RRAH.

Belongs to the krueppel C2H2-type zinc-finger protein family.

The protein localises to the nucleus. Its function is as follows. May be involved in transcriptional regulation. The polypeptide is Zinc finger protein 771 (Znf771) (Mus musculus (Mouse)).